We begin with the raw amino-acid sequence, 290 residues long: Beta-lactamase OXY-2 (290 aa).

A signal peptide spans 1 to 27 (MIKSSWRKIAMLAAAVPLLLASGALWA). The Acyl-ester intermediate role is filled by Ser-72. A substrate-binding site is contributed by 236–238 (KTG).

It belongs to the class-A beta-lactamase family.

It catalyses the reaction a beta-lactam + H2O = a substituted beta-amino acid. In terms of biological role, hydrolyzes broad-spectrum beta-lactam antibiotics. Active against all third-generation cephalosporins but ceftazidime. This is Beta-lactamase OXY-2 (bla) from Klebsiella oxytoca.